Reading from the N-terminus, the 217-residue chain is Thiopurine S-methyltransferase (217 aa).

Positions 11, 46, 67, and 122 each coordinate S-adenosyl-L-methionine.

The protein belongs to the class I-like SAM-binding methyltransferase superfamily. TPMT family.

Its subcellular location is the cytoplasm. The catalysed reaction is S-adenosyl-L-methionine + a thiopurine = S-adenosyl-L-homocysteine + a thiopurine S-methylether.. In Vibrio atlanticus (strain LGP32) (Vibrio splendidus (strain Mel32)), this protein is Thiopurine S-methyltransferase.